The sequence spans 342 residues: Serpentine receptor class gamma-69 (342 aa).

A run of 7 helical transmembrane segments spans residues 11–31 (MAGL…SVVV), 51–71 (SLLY…HFLI), 106–126 (PIAI…IVAA), 140–160 (LFVL…IPCK), 191–211 (IAAV…LIAL), 222–242 (AEIS…IYAF), and 269–289 (FAID…STTV).

The protein belongs to the nematode receptor-like protein srg family.

The protein localises to the membrane. In Caenorhabditis elegans, this protein is Serpentine receptor class gamma-69 (srg-69).